The sequence spans 349 residues: Fe(3+) ions import ATP-binding protein FbpC (349 aa).

The ABC transporter domain maps to 4–236; it reads LELHHIGKSY…PVDEPTATFL (233 aa). 36 to 43 lines the ATP pocket; sequence GPSGSGKT.

This sequence belongs to the ABC transporter superfamily. Fe(3+) ion importer (TC 3.A.1.10) family. As to quaternary structure, the complex is composed of two ATP-binding proteins (FbpC), two transmembrane proteins (FbpB) and a solute-binding protein (FbpA).

Its subcellular location is the cell inner membrane. The enzyme catalyses Fe(3+)(out) + ATP + H2O = Fe(3+)(in) + ADP + phosphate + H(+). Part of the ABC transporter complex FbpABC involved in Fe(3+) ions import. Responsible for energy coupling to the transport system. The sequence is that of Fe(3+) ions import ATP-binding protein FbpC from Yersinia pseudotuberculosis serotype I (strain IP32953).